Here is a 657-residue protein sequence, read N- to C-terminus: UvrABC system protein B (657 aa).

Residues 29–416 (KLAEFQTNEQ…LSHNNVVEQL (388 aa)) form the Helicase ATP-binding domain. 42–49 (GATGTGKT) contributes to the ATP binding site. The short motif at 95–118 (YFDFYQPEAYLPAKGVYIEKSATV) is the Beta-hairpin element. The 163-residue stretch at 435 to 597 (QVEDLVSEII…KTPMTVQKPI (163 aa)) folds into the Helicase C-terminal domain. Residues 615 to 650 (AALIKQLTKEMKQAAANQNYELAIEIRDSIFELEKQ) enclose the UVR domain.

Belongs to the UvrB family. Forms a heterotetramer with UvrA during the search for lesions. Interacts with UvrC in an incision complex.

It is found in the cytoplasm. Its function is as follows. The UvrABC repair system catalyzes the recognition and processing of DNA lesions. A damage recognition complex composed of 2 UvrA and 2 UvrB subunits scans DNA for abnormalities. Upon binding of the UvrA(2)B(2) complex to a putative damaged site, the DNA wraps around one UvrB monomer. DNA wrap is dependent on ATP binding by UvrB and probably causes local melting of the DNA helix, facilitating insertion of UvrB beta-hairpin between the DNA strands. Then UvrB probes one DNA strand for the presence of a lesion. If a lesion is found the UvrA subunits dissociate and the UvrB-DNA preincision complex is formed. This complex is subsequently bound by UvrC and the second UvrB is released. If no lesion is found, the DNA wraps around the other UvrB subunit that will check the other stand for damage. The sequence is that of UvrABC system protein B from Mycoplasma pneumoniae (strain ATCC 29342 / M129 / Subtype 1) (Mycoplasmoides pneumoniae).